The chain runs to 253 residues: Discoidin-1 subunit A (253 aa).

An N-acetylserine modification is found at serine 2. The region spanning 2–152 is the F5/8 type C domain; sequence STQGLVQLLA…ISLRCEFYTQ (151 aa). The Cell attachment site signature appears at 79-81; it reads RGD.

Tetramer of four different chains (A to D). Stalk cells.

The protein localises to the cytoplasm. Galactose- and N-acetylgalactosamine-binding lectin. May play a role in cell-substratum adhesion rather than in cell-cell adhesion. May be necessary for the maintenance of normal elongate morphology during aggregation. This Dictyostelium discoideum (Social amoeba) protein is Discoidin-1 subunit A (dscA-1).